A 92-amino-acid polypeptide reads, in one-letter code: Large ribosomal subunit protein bL27 (92 aa).

A propeptide spanning residues 1 to 10 (MLLQLQIQLF) is cleaved from the precursor.

This sequence belongs to the bacterial ribosomal protein bL27 family. Post-translationally, the N-terminus is cleaved by ribosomal processing cysteine protease Prp.

This Aster yellows witches'-broom phytoplasma (strain AYWB) protein is Large ribosomal subunit protein bL27.